A 57-amino-acid polypeptide reads, in one-letter code: Large ribosomal subunit protein uL30 (57 aa).

Belongs to the universal ribosomal protein uL30 family. Part of the 50S ribosomal subunit.

This chain is Large ribosomal subunit protein uL30, found in Maridesulfovibrio salexigens (strain ATCC 14822 / DSM 2638 / NCIMB 8403 / VKM B-1763) (Desulfovibrio salexigens).